A 223-amino-acid polypeptide reads, in one-letter code: Ras-related protein Rab-32 (223 aa).

Ala2 carries the N-acetylalanine modification. GTP is bound by residues Val34, Gly35, Lys36, Thr37, Ser38, Ser49, Gln50, Tyr52, and Thr55. Position 37 (Thr37) interacts with Mg(2+). The Switch 1 motif lies at 46-60 (QLFSQHYRATIGVDF). A Mg(2+)-binding site is contributed by Thr55. Phosphoserine is present on Ser69. Asp79 provides a ligand contact to Mg(2+). Residues Gly82, Asn141, Lys142, Asp144, Ala173, and Lys174 each contribute to the GTP site. The short motif at 82–95 (GQERFGNMTRVYYK) is the Switch 2 element. Residues 176–195 (NINIDEATRFLVENMLANQQ) form a PKA-RII subunit binding domain region. Residues Cys222 and Cys223 are each lipidated (S-geranylgeranyl cysteine).

This sequence belongs to the small GTPase superfamily. Rab family. In terms of assembly, interacts with ANKRD27. A decreased interaction with ANKRD27 seen in the presence of SGSM2. Interacts with LRRK2 (via N-terminus); this interaction results in stimulation of RAB10 phosphorylation by LRRK2. Mg(2+) is required as a cofactor. In terms of tissue distribution, widely expressed with highest levels in liver. Strong expression also found in melanocyte, platelet, mast cell and fibroblast cell lines.

Its subcellular location is the mitochondrion. The protein resides in the mitochondrion outer membrane. It localises to the cytoplasmic vesicle. It is found in the phagosome. The protein localises to the phagosome membrane. Its subcellular location is the melanosome. The protein resides in the melanosome membrane. The catalysed reaction is GTP + H2O = GDP + phosphate + H(+). With respect to regulation, regulated by guanine the nucleotide exchange factor (GEF) BLOC-3 complex composed of HPS1 and HPS4 which promote the exchange of bound GDP for free GTP. Regulated by the GTPase activating protein (GAP) SGSM2/RUTBC1 which increases the GTP hydrolysis activity. Inhibited by GDP dissociation inhibitors (GDIs) which prevent Rab-GDP dissociation. The small GTPases Rab are key regulators of intracellular membrane trafficking, from the formation of transport vesicles to their fusion with membranes. Rabs cycle between an inactive GDP-bound form and an active GTP-bound form that is able to recruit to membranes different set of downstream effectors directly responsible for vesicle formation, movement, tethering and fusion. Also acts as an A-kinase anchoring protein by binding to the type II regulatory subunit of protein kinase A and anchoring it to the mitochondrion. Also involved in synchronization of mitochondrial fission. Plays a role in the maturation of phagosomes that engulf pathogens, such as S.aureus and M.tuberculosis. Plays an important role in the control of melanin production and melanosome biogenesis. In concert with RAB38, regulates the proper trafficking of melanogenic enzymes TYR, TYRP1 and DCT/TYRP2 to melanosomes in melanocytes. Stimulates phosphorylation of RAB10 'Thr-73' by LRRK2. The chain is Ras-related protein Rab-32 from Mus musculus (Mouse).